We begin with the raw amino-acid sequence, 436 residues long: Cyclic nucleotide-binding domain-containing protein 1 (436 aa).

The span at 89-105 shows a compositional bias: basic and acidic residues; that stretch reads EQRELNEGKEESQHQQP. Residues 89–108 form a disordered region; sequence EQRELNEGKEESQHQQPDDS. 322 to 436 contributes to the a nucleoside 3',5'-cyclic phosphate binding site; it reads YYEEWPTLSI…IIEDKDLFVA (115 aa).

This chain is Cyclic nucleotide-binding domain-containing protein 1 (CNBD1), found in Homo sapiens (Human).